The following is a 724-amino-acid chain: Polyribonucleotide nucleotidyltransferase (724 aa).

The Mg(2+) site is built by D488 and D494. The region spanning 555-614 is the KH domain; the sequence is PRMITVKINPEKIRDVIGKGGSTIQALTKETGCTIDIGEDGTITIASTSSEGMAEAKRRI. Residues 624-692 form the S1 motif domain; sequence GKIYNGTVLK…EKGRMRLSIK (69 aa). The interval 697-724 is disordered; sequence EEGDVPVAAPQAPGAGDAASQQQQQQQQ. The segment covering 701-724 has biased composition (low complexity); sequence VPVAAPQAPGAGDAASQQQQQQQQ.

It belongs to the polyribonucleotide nucleotidyltransferase family. Requires Mg(2+) as cofactor.

Its subcellular location is the cytoplasm. The catalysed reaction is RNA(n+1) + phosphate = RNA(n) + a ribonucleoside 5'-diphosphate. Functionally, involved in mRNA degradation. Catalyzes the phosphorolysis of single-stranded polyribonucleotides processively in the 3'- to 5'-direction. The chain is Polyribonucleotide nucleotidyltransferase from Ralstonia pickettii (strain 12J).